We begin with the raw amino-acid sequence, 391 residues long: MAKEKFERNKPHVNIGTVGHVDHGKTTLTAAITKYFGDFKAYDQIDGAPEEKARGITISTAHVEYETEGRHYAHVDCPGHADYVKNMITGAAQMDGAILVVNAADGPMPQTREHILLARQVGVPALVVFMNKVDQVDDEELLELVEMEIRELLSSYDFPGDDIPIIAGSALAAMEGRDPEIGENKIKELMAAVDEYIPTPERAVDQPFLMPIEDVFSISGRGTVVTGRVERGVINVGDNIEIVGIKDTTTTTCTGVEMFRKLLDRGEAGDNIGALLRGIDREAVERGQVLCKPGSVTPHTKFEAEAYILTKEEGGRHTPFFANYRPQFYFRTTDVTGTVTLPEGTEMVMPGDNLKFEVELIAPIAMEDGLRFAIREGGRTVGAGVVSKILA.

The region spanning 10–201 is the tr-type G domain; it reads KPHVNIGTVG…AVDEYIPTPE (192 aa). Residues 19–26 form a G1 region; sequence GHVDHGKT. GTP is bound at residue 19 to 26; sequence GHVDHGKT. Thr26 serves as a coordination point for Mg(2+). Residues 55–59 are G2; that stretch reads GITIS. The segment at 76–79 is G3; it reads DCPG. Residues 76 to 80 and 131 to 134 contribute to the GTP site; these read DCPGH and NKVD. Positions 131–134 are G4; the sequence is NKVD. Residues 169-171 are G5; sequence SAL.

Belongs to the TRAFAC class translation factor GTPase superfamily. Classic translation factor GTPase family. EF-Tu/EF-1A subfamily. In terms of assembly, monomer.

The protein resides in the cytoplasm. The catalysed reaction is GTP + H2O = GDP + phosphate + H(+). In terms of biological role, GTP hydrolase that promotes the GTP-dependent binding of aminoacyl-tRNA to the A-site of ribosomes during protein biosynthesis. This Ruegeria sp. (strain TM1040) (Silicibacter sp.) protein is Elongation factor Tu.